A 545-amino-acid polypeptide reads, in one-letter code: E3 ubiquitin-protein ligase ipaH9.8 (545 aa).

Residues 1 to 242 (MLPINNNFSL…YHGPRIYFSM (242 aa)) are interaction with target proteins. 8 LRR repeats span residues 57–77 (NSDE…NLPA), 78–99 (QITL…PVTL), 100–117 (KKLY…VLPP), 118–139 (ALES…PDSL), 140–157 (LTMN…SLPQ), 158–179 (ALKN…SEGN), 182–203 (VVRE…ILNL), and 205–228 (NECS…QRLT). A linker region spans residues 243 to 250 (SDGQQNTL). Residues 251–545 (HRPLADAVTA…SENGSQLHHS (295 aa)) are E3 ubiquitin-protein ligase catalytic domain. The NEL domain occupies 253–545 (PLADAVTAWF…SENGSQLHHS (293 aa)). Cys-337 serves as the catalytic Glycyl thioester intermediate.

This sequence belongs to the LRR-containing bacterial E3 ligase family. In terms of assembly, also interacts with human and mouse U2AF1 (U2AF35). Post-translationally, ubiquitinated in the presence of host E1 ubiquitin-activating enzyme, E2 ubiquitin-conjugating enzyme and ubiquitin.

It localises to the secreted. The protein resides in the host cytoplasm. The protein localises to the host nucleus. It catalyses the reaction S-ubiquitinyl-[E2 ubiquitin-conjugating enzyme]-L-cysteine + [acceptor protein]-L-lysine = [E2 ubiquitin-conjugating enzyme]-L-cysteine + N(6)-ubiquitinyl-[acceptor protein]-L-lysine.. With respect to regulation, exists in an autoinhibited state in the absence of substrate protein, due to interactions of the leucine-rich repeats with NEL domain. Is activated upon binding to a substrate protein. Functionally, effector E3 ubiquitin ligase that interferes with host's ubiquitination pathway and modulates the acute inflammatory responses, thus facilitating bacterial colonization within the host cell. Interacts with IKBKG (NEMO) and TNIP1 (ABIN-1), a ubiquitin-binding adapter protein, which results in TNIP1-dependent 'Lys-27'-linked polyubiquitination of IKBKG. Consequently, polyubiquitinated IKBKG undergoes proteasome-dependent degradation, which perturbs NF-kappa-B activation during bacterial infection. Mediates polyubiquitination of host U2AF1, leading to its proteasomal degradation. Catalyzes 'Lys-48'-linked polyubiquitination and subsequent degradation of a subset of host guanylate-binding proteins (GBP1, GBP2, GBP4 and GBP6), thereby suppressing host cell defense. In contrast, host GBP3 and GBP7 are not ubiquitinated by IpaH9.8. Uses UBE2D2 (UBCH5B) as an E2 ubiquitin-conjugating enzyme. This chain is E3 ubiquitin-protein ligase ipaH9.8 (ipaH9.8), found in Shigella flexneri serotype X (strain 2002017).